The following is a 46-amino-acid chain: MDFNPSEVASQVTNYIQAIAAAGVGVLALAIGLSAAWKYAKRFLKG.

Met-1 bears the N-formylmethionine; by host mark. The Periplasmic segment spans residues 1–17 (MDFNPSEVASQVTNYIQ). Residues 18–37 (AIAAAGVGVLALAIGLSAAW) form a helical membrane-spanning segment. Topologically, residues 38–46 (KYAKRFLKG) are cytoplasmic.

Belongs to the inovirus capsid protein family. As to quaternary structure, homomultimerizes. There are several thousands of this protein in the phage capsid.

It localises to the virion. Its subcellular location is the host membrane. Functionally, self assembles to form a helical capsid wrapping up the viral genomic DNA. The capsid displays a filamentous structure with a length of 760-1950 nm and a width of 6-8 nm. The virion assembly and budding take place at the host inner membrane. This chain is Capsid protein G8P (VIII), found in Thermus thermophilus (Bacteriophage PH75).